The following is a 367-amino-acid chain: Small ribosomal subunit protein uS2 (367 aa).

The interval 1-68 is disordered; that stretch reads MPKKAEAKTG…NSTPSTGSKF (68 aa). Basic and acidic residues predominate over residues 21 to 40; that stretch reads AKKDVKAEVNETNKTAEKVS. The segment covering 53–66 has biased composition (low complexity); sequence TNESSSNSTPSTGS.

Belongs to the universal ribosomal protein uS2 family.

In Malacoplasma penetrans (strain HF-2) (Mycoplasma penetrans), this protein is Small ribosomal subunit protein uS2.